We begin with the raw amino-acid sequence, 3926 residues long: MGNEVSLEGGAGDGPLPPGGAGPGPGPGPGPGAGKPPSAPAGGGQLPAAGAARSTAVPPVPGPGPGPGPGPGPGSTSRRLDPKEPLGNQRAASPTPKQASATTPGHESPRETRAQGPAGQEADGPRRTLQVDSRTQRSGRSPSVSPDRGSTPTSPYSVPQIAPLPSSTLCPICKTSDLTSTPSQPNFNTCTQCHNKVCNQCGFNPNPHLTQVKEWLCLNCQMQRALGMDMTTAPRSKSQQQLHSPALSPAHSPAKQPLGKPDQERSRGPGGPQPGSRQAETARATSVPGPAQAAAPPEVGRVSPQPPQPTKPSTAEPRPPAGEAPAKSATAVPAGLGATEQTQEGLTGKLFGLGASLLTQASTLMSVQPEADTQGQPAPSKGTPKIVFNDASKEAGPKPLGSGPGPGPAPGAKTEPGARMGPGSGPGALPKTGGTTSPKHGRAEHQAASKAAAKPKTMPKERAICPLCQAELNVGSKSPANYNTCTTCRLQVCNLCGFNPTPHLVEKTEWLCLNCQTKRLLEGSLGEPTPLPPPTSQQPPVGAPHRASGTSPLKQKGPQGLGQPSGPLPAKASPLSTKASPLPSKASPQAKPLRASEPSKTPSSVQEKKTRVPTKAEPMPKPPPETTPTPATPKVKSGVRRAEPATPVVKAVPEAPKGGEAEDLVGKPYSQDASRSPQSLSDTGYSSDGISSSQSEITGVVQQEVEQLDSAGVTGPHPPSPSEIHKVGSSMRPLLQAQGLAPSERSKPLSSGTGEEQKQRPHSLSITPEAFDSDEELEDILEEDEDSAEWRRRREQQDTAESSDDFGSQLRHDYVEDSSEGGLSPLPPQPPARAAELTDEDFMRRQILEMSAEEDNLEEDDTATSGRGLAKHGTQKGGPRPRPEPSQEPAALPKRRLPHNATTGYEELLPEGGSAEATDGSGTLQGGLRRFKTIELNSTGSYGHELDLGQGPDPSLDREPELEMESLTGSPEDRSRGEHSSTLPASTPSYTSGTSPTSLSSLEEDSDSSPSRRQRLEEAKQQRKARHRSHGPLLPTIEDSSEEEELREEEELLREQEKMREVEQQRIRSTARKTRRDKEELRAQRRRERSKTPPSNLSPIEDASPTEELRQAAEMEELHRSSCSEYSPSPSLDSEAEALDGGPSRLYKSGSEYNLPTFMSLYSPTETPSGSSTTPSSGRPLKSAEEAYEEMMRKAELLQRQQGQAAGARGPHGGPSQPTGPRGLGSFEYQDTTDREYGQAAQPAAEGTPASLGAAVYEEILQTSQSIVRMRQASSRDLAFAEDKKKEKQFLNAESAYMDPMKQNGGPLTPGTSPTQLAAPVSFSTPTSSDSSGGRVIPDVRVTQHFAKETQDPLKLHSSPASPSSASKEIGMPFSQGPGTPATTAVAPCPAGLPRGYMTPASPAGSERSPSPSSTAHSYGHSPTTANYGSQTEDLPQAPSGLAAAGRAAREKPLSASDGEGGTPQPSRAYSYFASSSPPLSPSSPSESPTFSPGKMGPRATAEFSTQTPSPAPASDMPRSPGAPTPSPMVAQGTQTPHRPSTPRLVWQESSQEAPFMVITLASDASSQTRMVHASASTSPLCSPTETQPTTHGYSQTTPPSVSQLPPEPPGPPGFPRVPSAGADGPLALYGWGALPAENISLCRISSVPGTSRVEPGPRTPGTAVVDLRTAVKPTPIILTDQGMDLTSLAVEARKYGLALDPIPGRQSTAVQPLVINLNAQEHTFLATATTVSITMASSVFMAQQKQPVVYGDPYQSRLDFGQGGGSPVCLAQVKQVEQAVQTAPYRSGPRGRPREAKFARYNLPNQVAPLARRDVLITQMGTAQSIGLKPGPVPEPGAEPHRATPAELRSHALPGARKPHTVVVQMGEGTAGTVTTLLPEEPAGALDLTGMRPESQLACCDMVYKLPFGSSCTGTFHPAPSVPEKSMADAAPPGQSSSPFYGPRDPEPPEPPTYRAQGVVGPGPHEEQRPYPQGLPGRLYSSMSDTNLAEAGLNYHAQRIGQLFQGPGRDSAMDLSSLKHSYSLGFADGRYLGQGLQYGSVTDLRHPTDLLAHPLPMRRYSSVSNIYSDHRYGPRGDAVGFQEASLAQYSATTAREISRMCAALNSMDQYGGRHGSGGGGPDLVQYQPQHGPGLSAPQSLVPLRPGLLGNPTFPEGHPSPGNLAQYGPAAGQGTAVRQLLPSTATVRAADGMIYSTINTPIAATLPITTQPASVLRPMVRGGMYRPYASGGITAVPLTSLTRVPMIAPRVPLGPTGLYRYPAPSRFPIASSVPPAEGPVYLGKPAAAKAPGAGGPSRPEMPVGAAREEPLPTTTPAAIKEAAGAPAPAPLAGQKPPADAAPGGGSGALSRPGFEKEEASQEERQRKQQEQLLQLERERVELEKLRQLRLQEELERERVELQRHREEEQLLVQRELQELQTIKHHVLQQQQEERQAQFALQREQLAQQRLQLEQIQQLQQQLQQQLEEQKQRQKAPFPAACEAPGRGPPLAAAELAQNGQYWPPLTHAAFIAMAGPEGLGQPREPVLHRGLPSSASDMSLQTEEQWEASRSGIKKRHSMPRLRDACELESGTEPCVVRRIADSSVQTDDEDGESRYLLSRRRRARRSADCSVQTDDEDSAEWEQPVRRRRSRLPRHSDSGSDSKHDATASSSSAAATVRAMSSVGIQTISDCSVQTEPDQLPRVSPAIHITAATDPKVEIVRYISAPEKTGRGESLACQTEPDGQAQGVAGPQLVGPTAISPYLPGIQIVTPGPLGRFEKKKPDPLEIGYQAHLPPESLSQLVSRQPPKSPQVLYSPVSPLSPHRLLDTSFASSERLNKAHVSPQKHFTADSALRQQTLPRPMKTLQRSLSDPKPLSPTAEESAKERFSLYQHQGGLGSQVSALPPNSLVRKVKRTLPSPPPEEAHLPLAGQASPQLYAASLLQRGLTGPTTVPATKASLLRELDRDLRLVEHESTKLRKKQAELDEEEKEIDAKLKYLELGITQRKESLAKDRGGRDYPPLRGLGEHRDYLSDSELNQLRLQGCTTPAGQFVDFPATAAAPATPSGPTAFQQPRFQPPAPQYSAGSGGPTQNGFPAHQAPTYPGPSTYPAPAFPPGASYPAEPGLPNQQAFRPTGHYAGQTPMPTTQSTLFPVPADSRAPLQKPRQTSLADLEQKVPTNYEVIASPVVPMSSAPSETSYSGPAVSSGYEQGKVPEVPRAGDRGSVSQSPAPTYPSDSHYTSLEQNVPRNYVMIDDISELTKDSTSTAPDSQRLEPLGPGSSGRPGKEPGEPGVLDGPTLPCCYARGEEESEEDSYDPRGKGGHLRSMESNGRPASTHYYGDSDYRHGARVEKYGPGPMGPKHPSKSLAPAAISSKRSKHRKQGMEQKISKFSPIEEAKDVESDLASYPPPAVSSSLVSRGRKFQDEITYGLKKNVYEQQKYYGMSSRDAVEDDRIYGGSSRSRAPSAYSGEKLSSHDFSGWGKGYEREREAVERLQKAGPKPSSLSMAHSRVRPPMRSQASEEESPVSPLGRPRPAGGPLPPGGDTCPQFCSSHSMPDVQEHVKDGPRAHAYKREEGYILDDSHCVVSDSEAYHLGQEETDWFDKPRDARSDRFRHHGGHAVSSSSQKRGPARHSYHDYDEPPEEGLWPHDEGGPGRHASAKEHRHGDHGRHSGRHTGEEPGRRAAKPHARDLGRHEARPHSQPSSAPAMPKKGQPGYPSSAEYSQPSRASSAYHHASDSKKGSRQAHSGPAALQSKAEPQAQPQLQGRQAAPGPQQSQSPSSRQIPSGAASRQPQTQQQQQGLGLQPPQQALTQARLQQQSQPTTRGSAPAASQPAGKPQPGPSTATGPQPAGPPRAEQTNGSKGTAKAPQQGRAPQAQPAPGPGPAGVKAGARPGGTPGAPAGQPGADGESVFSKILPGGAAEQAGKLTEAVSAFGKKFSSFW.

Residues 1 to 161 form a disordered region; it reads MGNEVSLEGG…PTSPYSVPQI (161 aa). The N-myristoyl glycine moiety is linked to residue glycine 2. Pro residues-rich tracts occupy residues 15–30 and 58–72; these read PLPP…PGPG and PPVP…PGPG. A 5 X 2 AA tandem repeats of P-G region spans residues 23–32; the sequence is PGPGPGPGPG. The tract at residues 61-74 is 7 X 2 AA tandem repeats of P-G; sequence PGPGPGPGPGPGPG. Composition is skewed to polar residues over residues 90–105 and 130–157; these read RAAS…TTPG and QVDS…SPYS. Position 145 is a phosphoserine (serine 145). Arginine 148 is subject to Omega-N-methylarginine. 2 C4-type zinc fingers span residues 170-193 and 198-220; these read CPIC…CTQC and CNQC…CLNC. Disordered regions lie at residues 231–343 and 366–459; these read TTAP…EQTQ and SVQP…KTMP. Polar residues predominate over residues 233–243; that stretch reads APRSKSQQQLH. Serine 244 and serine 248 each carry phosphoserine. Positions 366–377 are enriched in polar residues; that stretch reads SVQPEADTQGQP. 2 C4-type zinc fingers span residues 465 to 488 and 493 to 515; these read CPLC…CTTC and CNLC…CLNC. 2 disordered regions span residues 524-927 and 940-1248; these read SLGE…LQGG and GSYG…AEGT. Residues 552–569 are compositionally biased toward low complexity; sequence PLKQKGPQGLGQPSGPLP. Repeat copies occupy residues 571–577, 578–584, and 585–591. The interval 571 to 591 is 3 X 7 AA tandem repeats of K-A-S-P-[LQ]-[APS]-[KST]; the sequence is KASPLSTKASPLPSKASPQAK. The segment covering 619 to 631 has biased composition (pro residues); the sequence is MPKPPPETTPTPA. Residues 671-680 are compositionally biased toward polar residues; it reads QDASRSPQSL. Low complexity predominate over residues 681 to 698; it reads SDTGYSSDGISSSQSEIT. Acidic residues predominate over residues 771–787; that stretch reads FDSDEELEDILEEDEDS. Residues 788–797 are compositionally biased toward basic and acidic residues; it reads AEWRRRREQQ. Acidic residues predominate over residues 851–862; the sequence is SAEEDNLEEDDT. An Omega-N-methylarginine modification is found at arginine 867. At serine 970 the chain carries Phosphoserine. The segment covering 984 to 1001 has biased composition (low complexity); that stretch reads PASTPSYTSGTSPTSLSS. Residues 1037-1092 adopt a coiled-coil conformation; it reads IEDSSEEEELREEEELLREQEKMREVEQQRIRSTARKTRRDKEELRAQRRRERSKT. The span at 1039 to 1052 shows a compositional bias: acidic residues; it reads DSSEEEELREEEEL. Residues serine 1040 and serine 1041 each carry the phosphoserine modification. Basic and acidic residues predominate over residues 1053–1066; the sequence is LREQEKMREVEQQR. The residue at position 1090 (serine 1090) is a Phosphoserine. Position 1092 is a phosphothreonine (threonine 1092). Serine 1098 and serine 1104 each carry phosphoserine. Residues 1107–1122 are compositionally biased toward basic and acidic residues; sequence EELRQAAEMEELHRSS. Low complexity-rich tracts occupy residues 1123–1133 and 1163–1180; these read CSEYSPSPSLD and SPTE…SGRP. The stretch at 1181–1208 forms a coiled coil; that stretch reads LKSAEEAYEEMMRKAELLQRQQGQAAGA. A compositionally biased stretch (basic and acidic residues) spans 1182–1197; that stretch reads KSAEEAYEEMMRKAEL. Residues 1199-1209 are compositionally biased toward low complexity; the sequence is QRQQGQAAGAR. Serine 1226 carries the post-translational modification Phosphoserine. A coiled-coil region spans residues 1276-1294; the sequence is RDLAFAEDKKKEKQFLNAE. Disordered regions lie at residues 1298–1547 and 1570–1620; these read MDPM…RLVW and RMVH…RVPS. Residues 1322–1332 show a composition bias toward low complexity; sequence SFSTPTSSDSS. A glycan (O-linked (GlcNAc) threonine) is linked at threonine 1343. Positions 1346–1355 are enriched in basic and acidic residues; the sequence is FAKETQDPLK. Composition is skewed to low complexity over residues 1358–1367 and 1377–1392; these read SSPASPSSAS and GPGT…CPAG. Threonine 1384 carries an O-linked (GlcNAc) threonine glycan. The segment covering 1408 to 1434 has biased composition (polar residues); that stretch reads RSPSPSSTAHSYGHSPTTANYGSQTED. Low complexity predominate over residues 1466 to 1493; it reads PSRAYSYFASSSPPLSPSSPSESPTFSP. Phosphoserine occurs at positions 1477, 1486, and 1488. A compositionally biased stretch (polar residues) spans 1570–1598; the sequence is RMVHASASTSPLCSPTETQPTTHGYSQTT. The span at 1606 to 1616 shows a compositional bias: pro residues; the sequence is PPEPPGPPGFP. An omega-N-methylarginine mark is found at arginine 1787 and arginine 1791. Arginine 1801 is subject to Asymmetric dimethylarginine; alternate. Residue arginine 1801 is modified to Omega-N-methylarginine; alternate. Residue arginine 1813 is modified to Omega-N-methylarginine. The segment at 1924–1978 is disordered; sequence PEKSMADAAPPGQSSSPFYGPRDPEPPEPPTYRAQGVVGPGPHEEQRPYPQGLPG. Phosphoserine is present on residues serine 1985 and serine 2041. Omega-N-methylarginine occurs at positions 2046 and 2076. Asymmetric dimethylarginine occurs at positions 2250, 2260, and 2266. Residues 2287–2309 form a disordered region; sequence AAKAPGAGGPSRPEMPVGAAREE. The O-linked (GlcNAc) threonine glycan is linked to threonine 2314. The span at 2324–2341 shows a compositional bias: low complexity; sequence GAPAPAPLAGQKPPADAA. Disordered stretches follow at residues 2324–2370 and 2532–2568; these read GAPA…KQQE and PSSA…ACEL. Residues 2351–2476 are a coiled coil; that stretch reads RPGFEKEEAS…EEQKQRQKAP (126 aa). Residues 2353–2370 are compositionally biased toward basic and acidic residues; sequence GFEKEEASQEERQRKQQE. Polar residues predominate over residues 2533-2543; that stretch reads SSASDMSLQTE. A Phosphoserine modification is found at serine 2570. Threonine 2587 and threonine 2614 each carry phosphothreonine. Residues 2601-2655 form a disordered region; sequence RRRARRSADCSVQTDDEDSAEWEQPVRRRRSRLPRHSDSGSDSKHDATASSSSAA. The segment covering 2635 to 2647 has biased composition (basic and acidic residues); it reads RHSDSGSDSKHDA. A glycan (O-linked (GlcNAc) threonine) is linked at threonine 2691. Residues 2721 to 3268 are interaction with DAO; the sequence is EPDGQAQGVA…PGSSGRPGKE (548 aa). Serine 2802, serine 2851, and serine 2857 each carry phosphoserine. The interval 2845-2865 is disordered; it reads TLQRSLSDPKPLSPTAEESAK. Residue threonine 2936 is glycosylated (O-linked (GlcNAc) threonine). Positions 2939–2981 form a coiled coil; it reads SLLRELDRDLRLVEHESTKLRKKQAELDEEEKEIDAKLKYLEL. Phosphoserine is present on serine 3013. The span at 3039–3055 shows a compositional bias: low complexity; sequence AAAPATPSGPTAFQQPR. Disordered stretches follow at residues 3039–3375, 3424–3551, and 3572–3897; these read AAAP…FSPI, GMSS…PRAH, and EAYH…SVFS. Pro residues predominate over residues 3083–3095; the sequence is YPGPSTYPAPAFP. Over residues 3165–3176 the composition is skewed to low complexity; the sequence is ASPVVPMSSAPS. A compositionally biased stretch (polar residues) spans 3205–3228; that stretch reads SVSQSPAPTYPSDSHYTSLEQNVP. Serine 3291 bears the Phosphoserine mark. Composition is skewed to basic and acidic residues over residues 3321–3333, 3363–3375, and 3465–3477; these read GDSD…RVEK, QGME…FSPI, and GYER…ERLQ. The residue at position 3373 (serine 3373) is a Phosphoserine. At arginine 3492 the chain carries Omega-N-methylarginine. Composition is skewed to basic and acidic residues over residues 3540–3551, 3583–3593, 3628–3647, and 3657–3681; these read VQEHVKDGPRAH, WFDKPRDARSD, LWPH…EHRH, and HTGE…EARP. Positions 3703–3712 are enriched in polar residues; that stretch reads AEYSQPSRAS. Residues 3741–3807 show a composition bias toward low complexity; sequence PQAQPQLQGR…RLQQQSQPTT (67 aa). Arginine 3808 is subject to Omega-N-methylarginine. Low complexity-rich tracts occupy residues 3849–3860 and 3882–3892; these read AKAPQQGRAPQA and GAPAGQPGADG.

As to quaternary structure, interacts with PCLO, ERC2/CAST1, RIMS1 and UNC13A. Interacts with TPRG1L. Interacts with DYNLL1 and DYNLL2; these interactions potentially link PTVs to dynein and myosin V motor complexes. Interacts with ATG5; this interaction is important for the regulation of presynaptic autophagy. Interacts (via C-terminus) with TRIO (via N-terminus). Interacts with CTBP1. Interacts with SIAH1; this interaction negatively regulates SIAH1 E3 ligase activity. Interacts (via coiled region) with DAO; the interaction is direct. Post-translationally, myristoylated. The N-terminal myristoylation is not sufficient for presynaptic localization. In terms of tissue distribution, exclusively expressed in brain.

The protein localises to the cytoplasm. Its subcellular location is the presynaptic active zone. It is found in the cytoskeleton. It localises to the cytoplasmic vesicle. The protein resides in the secretory vesicle. The protein localises to the synaptic vesicle membrane. Functionally, scaffold protein of the presynaptic cytomatrix at the active zone (CAZ) which is the place in the synapse where neurotransmitter is released. After synthesis, participates in the formation of Golgi-derived membranous organelles termed Piccolo-Bassoon transport vesicles (PTVs) that are transported along axons to sites of nascent synaptic contacts. At the presynaptic active zone, regulates the spatial organization of synaptic vesicle cluster, the protein complexes that execute membrane fusion and compensatory endocytosis. Also functions in processes other than assembly such as the regulation of specific presynaptic protein ubiquitination by interacting with SIAH1 or the regulation of presynaptic autophagy by associating with ATG5. Also mediates synapse to nucleus communication leading to reconfiguration of gene expression by associating with the transcriptional corepressor CTBP1 and by subsequently reducing the size of its pool available for nuclear import. Inhibits the activity of the proportion of DAO enzyme that localizes to the presynaptic active zone, which may modulate synaptic transmission. The polypeptide is Protein bassoon (Homo sapiens (Human)).